The primary structure comprises 128 residues: NADH-quinone oxidoreductase subunit A (128 aa).

The next 3 helical transmembrane spans lie at 12–32 (FAIF…LSFL), 66–86 (FYLI…LYAW), and 96–116 (LGFY…VYLV).

Belongs to the complex I subunit 3 family. As to quaternary structure, NDH-1 is composed of 14 different subunits. Subunits NuoA, H, J, K, L, M, N constitute the membrane sector of the complex.

Its subcellular location is the cell membrane. The catalysed reaction is a quinone + NADH + 5 H(+)(in) = a quinol + NAD(+) + 4 H(+)(out). Functionally, NDH-1 shuttles electrons from NADH, via FMN and iron-sulfur (Fe-S) centers, to quinones in the respiratory chain. The immediate electron acceptor for the enzyme in this species is believed to be ubiquinone. Couples the redox reaction to proton translocation (for every two electrons transferred, four hydrogen ions are translocated across the cytoplasmic membrane), and thus conserves the redox energy in a proton gradient. The sequence is that of NADH-quinone oxidoreductase subunit A from Baumannia cicadellinicola subsp. Homalodisca coagulata.